Reading from the N-terminus, the 107-residue chain is Iron-binding protein IscA (107 aa).

Residues Cys35, Cys99, and Cys101 each contribute to the Fe cation site.

The protein belongs to the HesB/IscA family. As to quaternary structure, homodimer; may form tetramers and higher multimers. Fe cation serves as cofactor.

Its function is as follows. Is able to transfer iron-sulfur clusters to apo-ferredoxin. Multiple cycles of [2Fe2S] cluster formation and transfer are observed, suggesting that IscA acts catalytically. Recruits intracellular free iron so as to provide iron for the assembly of transient iron-sulfur cluster in IscU in the presence of IscS, L-cysteine and the thioredoxin reductase system TrxA/TrxB. In Klebsiella pneumoniae subsp. pneumoniae (strain ATCC 700721 / MGH 78578), this protein is Iron-binding protein IscA.